The chain runs to 493 residues: Probable cytosol aminopeptidase (493 aa).

Mn(2+) is bound by residues Lys256 and Asp261. Residue Lys268 is part of the active site. Mn(2+) contacts are provided by Asp279, Asp338, and Glu340. Arg342 is a catalytic residue.

This sequence belongs to the peptidase M17 family. Requires Mn(2+) as cofactor.

The protein resides in the cytoplasm. The enzyme catalyses Release of an N-terminal amino acid, Xaa-|-Yaa-, in which Xaa is preferably Leu, but may be other amino acids including Pro although not Arg or Lys, and Yaa may be Pro. Amino acid amides and methyl esters are also readily hydrolyzed, but rates on arylamides are exceedingly low.. It carries out the reaction Release of an N-terminal amino acid, preferentially leucine, but not glutamic or aspartic acids.. Its function is as follows. Presumably involved in the processing and regular turnover of intracellular proteins. Catalyzes the removal of unsubstituted N-terminal amino acids from various peptides. The polypeptide is Probable cytosol aminopeptidase (Phytoplasma australiense).